The primary structure comprises 341 residues: Cell wall mannoprotein PIR1 (341 aa).

The signal sequence occupies residues 1 to 18 (MQYKKSLVASALVTTSLA). The propeptide occupies 19–63 (AYAPKDPWSTLTPSATYKGGITDYSSTFGIAVEPIATTASSKAKR). 8 PIR1/2/3 repeats span residues 64-82 (AAAISQIGDGQIQATTKTT), 83-101 (AAAVSQIGDGQIQATTKTK), 102-120 (AAAVSQIGDGQIQATTKTT), 126-144 (AAAVSQIGDGQIQATTKTK), 145-163 (AAAVSQIGDGQIQATTKTT), 164-182 (AAAVSQIGDGQIQATTKTT), 183-201 (AAAVSQIGDGQIQATTNTT), and 202-220 (VAPVSQITDGQIQATTLTS).

This sequence belongs to the PIR protein family. Post-translationally, covalently linked to beta-1,3-glucan of the inner cell wall layer via an alkali-sensitive ester linkage between the gamma-carboxyl group of glutamic acids, arising from specific glutamines within the PIR1/2/3 repeats, and hydroxyl groups of glucoses of beta-1,3-glucan chains. O-glycosylated. Extensively O-mannosylated.

It is found in the secreted. The protein localises to the cell wall. Component of the outer cell wall layer. Required for stability of the cell wall and for optimal growth. Required for resistance against several antifungal and cell wall-perturbing agents and for tolerance to heat shock. The sequence is that of Cell wall mannoprotein PIR1 (PIR1) from Saccharomyces cerevisiae (strain RM11-1a) (Baker's yeast).